A 447-amino-acid chain; its full sequence is ATP-dependent protease ATPase subunit HslU (447 aa).

ATP-binding positions include Ile18, 60–65 (GVGKTE), Asp259, Glu325, and Arg397.

Belongs to the ClpX chaperone family. HslU subfamily. As to quaternary structure, a double ring-shaped homohexamer of HslV is capped on each side by a ring-shaped HslU homohexamer. The assembly of the HslU/HslV complex is dependent on binding of ATP.

The protein localises to the cytoplasm. Its function is as follows. ATPase subunit of a proteasome-like degradation complex; this subunit has chaperone activity. The binding of ATP and its subsequent hydrolysis by HslU are essential for unfolding of protein substrates subsequently hydrolyzed by HslV. HslU recognizes the N-terminal part of its protein substrates and unfolds these before they are guided to HslV for hydrolysis. The chain is ATP-dependent protease ATPase subunit HslU from Burkholderia pseudomallei (strain K96243).